Consider the following 251-residue polypeptide: Astacin (251 aa).

A signal peptide spans 1–15 (MQCAVLLVLLGVVAA). A propeptide spans 16–49 (SPIIPEAARALYYNDGMFEGDIKLRAGRQPARVG) (activation peptide). The 199-residue stretch at 50–248 (AAILGDEYLW…INNLYTNECS (199 aa)) folds into the Peptidase M12A domain. Cystine bridges form between C91/C247 and C113/C133. H141 provides a ligand contact to Zn(2+). E142 is an active-site residue. Zn(2+) is bound by residues H145 and H151. Residues 250–251 (RH) constitute a propeptide that is removed on maturation.

In terms of assembly, monomer. Zn(2+) is required as a cofactor.

The catalysed reaction is Hydrolysis of peptide bonds in substrates containing five or more amino acids, preferentially with Ala in P1', and Pro in P2'.. In terms of biological role, metalloprotease. This protease prefers to cleave in front of small aliphatic residues (P1'). The presence of Lys or Arg in the P1 and P2 position yields high-turnover substrates. In the P3 position the enzyme prefers Pro &gt; Val &gt; Leu &gt; Ala &gt; Gly. In Astacus astacus (Noble crayfish), this protein is Astacin.